The following is a 261-amino-acid chain: Ribosomal RNA small subunit methyltransferase A (261 aa).

6 residues coordinate S-adenosyl-L-methionine: N11, L13, G38, E59, D84, and S106.

The protein belongs to the class I-like SAM-binding methyltransferase superfamily. rRNA adenine N(6)-methyltransferase family. RsmA subfamily.

It is found in the cytoplasm. It carries out the reaction adenosine(1518)/adenosine(1519) in 16S rRNA + 4 S-adenosyl-L-methionine = N(6)-dimethyladenosine(1518)/N(6)-dimethyladenosine(1519) in 16S rRNA + 4 S-adenosyl-L-homocysteine + 4 H(+). Functionally, specifically dimethylates two adjacent adenosines (A1518 and A1519) in the loop of a conserved hairpin near the 3'-end of 16S rRNA in the 30S particle. May play a critical role in biogenesis of 30S subunits. The polypeptide is Ribosomal RNA small subunit methyltransferase A (Wigglesworthia glossinidia brevipalpis).